A 174-amino-acid chain; its full sequence is UPF0340 protein SAR2202 (174 aa).

Belongs to the UPF0340 family.

This is UPF0340 protein SAR2202 from Staphylococcus aureus (strain MRSA252).